Consider the following 107-residue polypeptide: uncharacterized protein (107 aa).

This is an uncharacterized protein from Yersinia pseudotuberculosis serotype I (strain IP32953).